Consider the following 216-residue polypeptide: Probable nicotinate-nucleotide adenylyltransferase (216 aa).

Belongs to the NadD family.

The catalysed reaction is nicotinate beta-D-ribonucleotide + ATP + H(+) = deamido-NAD(+) + diphosphate. It participates in cofactor biosynthesis; NAD(+) biosynthesis; deamido-NAD(+) from nicotinate D-ribonucleotide: step 1/1. In terms of biological role, catalyzes the reversible adenylation of nicotinate mononucleotide (NaMN) to nicotinic acid adenine dinucleotide (NaAD). This chain is Probable nicotinate-nucleotide adenylyltransferase, found in Geobacillus thermodenitrificans (strain NG80-2).